The chain runs to 1904 residues: Pericentriolar material 1 protein (1904 aa).

Disordered regions lie at residues 1–135 (MATG…SGEP), 159–179 (QEDG…PQQE), 265–303 (HDSQ…QSDE), 338–361 (NSSF…TSAA), 376–407 (NSLA…EKLQ), 430–489 (SDMM…GTNN), and 520–559 (CHNR…LGDV). Basic and acidic residues predominate over residues 43–60 (RSSEKNKKKLGGEAETRL). The segment covering 107–118 (INFSDLDQINTN) has biased composition (polar residues). The stretch at 171-212 (SQARDPQQEAKEELENLKKQHDLLKRMLQQQEQLKALQGRQA) forms a coiled coil. A compositionally biased stretch (polar residues) spans 280–298 (ESLSLTREISQSRNSSVSE). The stretch at 301–334 (SDEKAQLFNKMRMLQGKKQKMDKLLGELHTLRDQ) forms a coiled coil. Residues 338-348 (NSSFFPASSSP) are compositionally biased toward low complexity. The span at 349 to 361 (QRSIDQRSTTSAA) shows a compositional bias: polar residues. Residues 403 to 429 (TEKLQKLNEVRKRLNELRELVHYYEQT) adopt a coiled-coil conformation. Positions 442-452 (KEEEETEDSGS) are enriched in acidic residues. Positions 461–470 (PVTNIRNPQG) are enriched in polar residues. Residues 471–482 (ISSWSEINSNSN) are compositionally biased toward low complexity. Residues 520-534 (CHNREDDKHADLPHG) are compositionally biased toward basic and acidic residues. Residues 535–544 (EDDEVEEDRA) are compositionally biased toward acidic residues. 2 coiled-coil regions span residues 562–592 (DAEF…VQDD) and 636–686 (LNEK…LQSA). Positions 686-706 (AGLGNSPANRQTSPATSTPAM) are disordered. Positions 687–706 (GLGNSPANRQTSPATSTPAM) are enriched in polar residues. Residues 731 to 768 (SEMRRHEILREELRRRRKQLEALMAEHQRRRELAETIS) are a coiled coil. The tract at residues 773–840 (SVKSEGSEAQ…PSMNDSFSAY (68 aa)) is disordered. The span at 779–804 (SEAQRTPQQSRTENRTMATWGGSTQC) shows a compositional bias: polar residues. The segment covering 806 to 830 (LDEEDGDEDGYLSDGLDQAEEEEDA) has biased composition (acidic residues). 2 coiled-coil regions span residues 895-927 (SELS…CQTL) and 970-1000 (TQLS…CQEK). Disordered stretches follow at residues 991–1018 (HQQE…SPVF), 1063–1082 (GFPQ…ASGK), and 1088–1225 (FPKP…TGYD). Polar residues-rich tracts occupy residues 1064–1073 (FPQSSEQQQH) and 1093–1102 (ESSSSTGAEN). Residues 1103–1117 (QRSHRQPEDEVEKRS) are compositionally biased toward basic and acidic residues. Residues 1141-1150 (SVQSIASGHK) show a composition bias toward polar residues. Residues 1151 to 1162 (NQSDTSRRRNFD) are compositionally biased toward basic and acidic residues. Residues 1173 to 1182 (PDPVDPTTVT) are compositionally biased toward low complexity. Residues 1421 to 1447 (IHLDQALARMREYERMKIEAESTLDSE) are a coiled coil. Positions 1616 to 1625 (AKEDKDETET) are enriched in basic and acidic residues. Disordered stretches follow at residues 1616 to 1741 (AKED…VKGE), 1774 to 1838 (MKTE…SDED), and 1865 to 1904 (EAQT…AQSA). The span at 1649-1658 (SDQEEDEESE) shows a compositional bias: acidic residues. A compositionally biased stretch (polar residues) spans 1668–1678 (KAETQALTNYG). Positions 1680–1695 (GEDENEDEEIEFEEGP) are enriched in acidic residues. 3 stretches are compositionally biased toward polar residues: residues 1698–1720 (VQTS…SQEL), 1728–1737 (ILSSEQQSVN), and 1779–1791 (SSSS…TQML). Over residues 1800-1812 (SSAGSSESSMAGS) the composition is skewed to low complexity. Positions 1881–1897 (EQDRELVGDAQTLKEPE) are enriched in basic and acidic residues.

The protein belongs to the PCM1 family. In terms of assembly, self-associates.

It is found in the cytoplasm. Its subcellular location is the cytoskeleton. It localises to the microtubule organizing center. The protein localises to the centrosome. The protein resides in the cytoplasmic granule. It is found in the centriolar satellite. Its subcellular location is the cilium basal body. In terms of biological role, required for centrosome assembly and function. Essential for the correct localization of several centrosomal proteins including CETN3 and PCNT. Required to anchor microtubules to the centrosome. Probably involved in the biogenesis of cilia. In Gallus gallus (Chicken), this protein is Pericentriolar material 1 protein (PCM1).